Here is a 212-residue protein sequence, read N- to C-terminus: Thymidylate kinase (212 aa).

Residue 11-18 (GPEGAGKT) coordinates ATP.

The protein belongs to the thymidylate kinase family.

The catalysed reaction is dTMP + ATP = dTDP + ADP. Its function is as follows. Phosphorylation of dTMP to form dTDP in both de novo and salvage pathways of dTTP synthesis. The protein is Thymidylate kinase of Streptococcus pneumoniae (strain P1031).